A 483-amino-acid polypeptide reads, in one-letter code: Septin-8 (483 aa).

Positions 1–16 (MAATDLERFSNAEPEP) are enriched in basic and acidic residues. The disordered stretch occupies residues 1-22 (MAATDLERFSNAEPEPRSLSLG). At Ala2 the chain carries N-acetylalanine. Phosphoserine is present on Ser10. The Septin-type G domain occupies 41-307 (QGFSFNILCV…ELYRRCKLEE (267 aa)). Residues 51–58 (GETGIGKS) form a G1 motif region. Residues 51–58 (GETGIGKS), Gly106, 187–195 (KADTISKSE), Gly241, and Arg256 each bind GTP. Residues 103–106 (DAVG) are G3 motif. The interval 186–189 (AKAD) is G4 motif. The stretch at 320 to 413 (FSLQETYEAK…AVEALQSQAL (94 aa)) forms a coiled coil. The span at 411-420 (QALHATSQQP) shows a compositional bias: polar residues. A disordered region spans residues 411–443 (QALHATSQQPLRKDKDKKNRSDIGAHQPGMSLS). Basic and acidic residues predominate over residues 421–433 (LRKDKDKKNRSDI).

This sequence belongs to the TRAFAC class TrmE-Era-EngA-EngB-Septin-like GTPase superfamily. Septin GTPase family. As to quaternary structure, septins polymerize into heterooligomeric protein complexes that form filaments, and can associate with cellular membranes, actin filaments and microtubules. GTPase activity is required for filament formation. Interacts with CDK14. Interacts with SEPTIN5. Interacts with SEPTIN7. Interacts with SEPTIN4. Interacts with VAMP2; the interaction inhibits interaction of VAMP2 with SYP. Interacts with STX1A. As to expression, widely expressed, including in brain, heart and platelets; most abundant in aorta. Isoform 2 is expressed at low levels in specific brain areas, such as occipital pole, frontal lobe, temporal lobe and putamen. Isoform 1 and 3 are highly expressed in specific brain areas, such as occipital pole, frontal lobe, temporal lobe and putamen. Isoform 2 is highly expressed in prostate, testis and ovary. Isoform 1 and isoform 3 are expressed at low levels in prostate, testis and ovary.

It localises to the cytoplasm. The protein localises to the cytoskeleton. The protein resides in the synapse. Its subcellular location is the cell projection. It is found in the axon. It localises to the cytoplasmic vesicle. The protein localises to the secretory vesicle. The protein resides in the synaptic vesicle membrane. Its subcellular location is the presynapse. Filament-forming cytoskeletal GTPase. May play a role in platelet secretion. Seems to participate in the process of SNARE complex formation in synaptic vesicles. In terms of biological role, stabilizes BACE1 protein levels and promotes the sorting and accumulation of BACE1 to the recycling or endosomal compartments, modulating the beta-amyloidogenic processing of APP. This Homo sapiens (Human) protein is Septin-8.